The primary structure comprises 298 residues: FH protein interacting protein FIP2 (298 aa).

One can recognise a BTB domain in the interval serine 9–serine 80. 4 consecutive Pentapeptide repeat domains span residues glutamate 129–arginine 165, threonine 166–leucine 203, alanine 216–glycine 255, and alanine 256–glycine 295.

In terms of assembly, interacts with FH1. As to expression, expressed in all tissues but preferentially in roots and flowers.

Its pathway is protein modification; protein ubiquitination. Functionally, may act as a substrate-specific adapter of an E3 ubiquitin-protein ligase complex (CUL3-RBX1-BTB) which mediates the ubiquitination and subsequent proteasomal degradation of target proteins. The polypeptide is FH protein interacting protein FIP2 (FIP2) (Arabidopsis thaliana (Mouse-ear cress)).